A 520-amino-acid chain; its full sequence is Cytochrome P450 4F2 (520 aa).

Residues 1 to 4 constitute a propeptide that is removed on maturation; that stretch reads MSQL. Glu-328 and Cys-468 together coordinate heme.

The protein belongs to the cytochrome P450 family. The cofactor is heme. In terms of tissue distribution, liver. Also present in kidney: specifically expressed in the S2 and S3 segments of proximal tubules in cortex and outer medulla.

The protein localises to the microsome membrane. It localises to the endoplasmic reticulum membrane. The enzyme catalyses an organic molecule + reduced [NADPH--hemoprotein reductase] + O2 = an alcohol + oxidized [NADPH--hemoprotein reductase] + H2O + H(+). It carries out the reaction (5Z,8Z,11Z,14Z)-eicosatetraenoate + reduced [NADPH--hemoprotein reductase] + O2 = 20-hydroxy-(5Z,8Z,11Z,14Z)-eicosatetraenoate + oxidized [NADPH--hemoprotein reductase] + H2O + H(+). It catalyses the reaction (5Z,8Z,11Z)-eicosatrienoate + reduced [NADPH--hemoprotein reductase] + O2 = 20-hydroxy-(5Z,8Z,11Z)-eicosatrienoate + oxidized [NADPH--hemoprotein reductase] + H2O + H(+). The catalysed reaction is (5Z,8Z,11Z,14Z,17Z)-eicosapentaenoate + reduced [NADPH--hemoprotein reductase] + O2 = 20-hydroxy-(5Z,8Z,11Z,14Z,17Z)-eicosapentaenoate + oxidized [NADPH--hemoprotein reductase] + H2O + H(+). The enzyme catalyses (4Z,7Z,10Z,13Z,16Z,19Z)-docosahexaenoate + reduced [NADPH--hemoprotein reductase] + O2 = 22-hydroxy-(4Z,7Z,10Z,13Z,16Z,19Z)-docosahexaenoate + oxidized [NADPH--hemoprotein reductase] + H2O + H(+). It carries out the reaction 8,9-epoxy-(5Z,11Z,14Z)-eicosatrienoate + reduced [NADPH--hemoprotein reductase] + O2 = 20-hydroxy-8,9-epoxy-(5Z,11Z,14Z)-eicosatrienoate + oxidized [NADPH--hemoprotein reductase] + H2O + H(+). It catalyses the reaction (9S,10R)-epoxy-octadecanoate + reduced [NADPH--hemoprotein reductase] + O2 = 18-hydroxy-(9S,10R)-epoxy-octadecanoate + oxidized [NADPH--hemoprotein reductase] + H2O + H(+). The catalysed reaction is (9R,10S)-epoxy-octadecanoate + reduced [NADPH--hemoprotein reductase] + O2 = 18-hydroxy-(9R,10S)-epoxy-octadecanoate + oxidized [NADPH--hemoprotein reductase] + H2O + H(+). The enzyme catalyses 12,13-epoxy-(9Z)-octadecenoate + reduced [NADPH--hemoprotein reductase] + O2 = 18-hydroxy-12,13-epoxy-(9Z)-octadecenoate + oxidized [NADPH--hemoprotein reductase] + H2O + H(+). It carries out the reaction 9,10-epoxy-(12Z)-octadecenoate + reduced [NADPH--hemoprotein reductase] + O2 = 18-hydroxy-9,10-epoxy-(12Z)-octadecenoate + oxidized [NADPH--hemoprotein reductase] + H2O + H(+). It catalyses the reaction 8-hydroxy-(5Z,9E,11Z,14Z)-eicosatetraenoate + reduced [NADPH--hemoprotein reductase] + O2 = 8,20-dihydroxy-(5Z,9E,11Z,14Z)-eicosatetraenoate + oxidized [NADPH--hemoprotein reductase] + H2O + H(+). The catalysed reaction is 12-hydroxy-(5Z,8Z,10E,14Z)-eicosatetraenoate + reduced [NADPH--hemoprotein reductase] + O2 = 12,20-dihydroxy-(5Z,8Z,10E,14Z)-eicosatetraenoate + oxidized [NADPH--hemoprotein reductase] + H2O + H(+). The enzyme catalyses 12-hydroxyoctadecanoate + reduced [NADPH--hemoprotein reductase] + O2 = 12,18-dihydroxyoctadecanoate + oxidized [NADPH--hemoprotein reductase] + H2O + H(+). It carries out the reaction docosanoate + reduced [NADPH--hemoprotein reductase] + O2 = 22-hydroxydocosanoate + oxidized [NADPH--hemoprotein reductase] + H2O + H(+). It catalyses the reaction 22-hydroxydocosanoate + reduced [NADPH--hemoprotein reductase] + O2 = 22-oxodocosanoate + oxidized [NADPH--hemoprotein reductase] + 2 H2O + H(+). The catalysed reaction is 22-oxodocosanoate + reduced [NADPH--hemoprotein reductase] + O2 = docosanedioate + oxidized [NADPH--hemoprotein reductase] + H2O + 2 H(+). The enzyme catalyses tetracosanoate + reduced [NADPH--hemoprotein reductase] + O2 = 24-hydroxytetracosanoate + oxidized [NADPH--hemoprotein reductase] + H2O + H(+). It carries out the reaction hexacosanoate + reduced [NADPH--hemoprotein reductase] + O2 = 26-hydroxyhexacosanoate + oxidized [NADPH--hemoprotein reductase] + H2O + H(+). It catalyses the reaction 26-hydroxyhexacosanoate + reduced [NADPH--hemoprotein reductase] + O2 = 26-oxohexacosanoate + oxidized [NADPH--hemoprotein reductase] + 2 H2O + H(+). The catalysed reaction is 26-oxohexacosanoate + reduced [NADPH--hemoprotein reductase] + O2 = hexacosanedioate + oxidized [NADPH--hemoprotein reductase] + H2O + 2 H(+). The enzyme catalyses 3-hydroxyoctadecanoate + reduced [NADPH--hemoprotein reductase] + O2 = 3,18-dihydroxyoctadecanoate + oxidized [NADPH--hemoprotein reductase] + H2O + H(+). It carries out the reaction 3-hydroxyhexadecanoate + reduced [NADPH--hemoprotein reductase] + O2 = 3,16-dihydroxyhexadecanoate + oxidized [NADPH--hemoprotein reductase] + H2O + H(+). It catalyses the reaction leukotriene B4 + reduced [NADPH--hemoprotein reductase] + O2 = 20-hydroxy-leukotriene B4 + oxidized [NADPH--hemoprotein reductase] + H2O + H(+). The catalysed reaction is 6-trans-leukotriene B4 + reduced [NADPH--hemoprotein reductase] + O2 = 20-hydroxy-6-trans-leukotriene B4 + oxidized [NADPH--hemoprotein reductase] + H2O + H(+). The enzyme catalyses lipoxin A4 + reduced [NADPH--hemoprotein reductase] + O2 = 20-hydroxy-lipoxin A4 + oxidized [NADPH--hemoprotein reductase] + H2O + H(+). It carries out the reaction menaquinone-4 + reduced [NADPH--hemoprotein reductase] + O2 = omega-hydroxymenaquinone-4 + oxidized [NADPH--hemoprotein reductase] + H2O + H(+). It catalyses the reaction phylloquinone + reduced [NADPH--hemoprotein reductase] + O2 = omega-hydroxyphylloquinone + oxidized [NADPH--hemoprotein reductase] + H2O + H(+). The catalysed reaction is (+)-alpha-tocopherol + reduced [NADPH--hemoprotein reductase] + O2 = 13-hydroxy-alpha-tocopherol + oxidized [NADPH--hemoprotein reductase] + H2O + H(+). The enzyme catalyses gamma-tocopherol + NADPH + O2 + H(+) = 13-hydroxy-gamma-tocopherol + NADP(+) + H2O. It functions in the pathway lipid metabolism; arachidonate metabolism. Its pathway is lipid metabolism; leukotriene B4 degradation. It participates in cofactor degradation; phylloquinone degradation. Its activity is regulated as follows. Inhibited by dietary sesamin. In terms of biological role, a cytochrome P450 monooxygenase involved in the metabolism of various endogenous substrates, including fatty acids, eicosanoids and vitamins. Mechanistically, uses molecular oxygen inserting one oxygen atom into a substrate, and reducing the second into a water molecule, with two electrons provided by NADPH via cytochrome P450 reductase (CPR; NADPH-ferrihemoprotein reductase). Catalyzes predominantly the oxidation of the terminal carbon (omega-oxidation) of long- and very long-chain fatty acids. Displays high omega-hydroxylase activity toward polyunsaturated fatty acids (PUFAs). Participates in the conversion of arachidonic acid to omega-hydroxyeicosatetraenoic acid (20-HETE), a signaling molecule acting both as vasoconstrictive and natriuretic with overall effect on arterial blood pressure. Plays a role in the oxidative inactivation of eicosanoids, including both pro-inflammatory and anti-inflammatory mediators such as leukotriene B4 (LTB4), lipoxin A4 (LXA4), and several HETEs. Catalyzes omega-hydroxylation of 3-hydroxy fatty acids. Converts monoepoxides of linoleic acid leukotoxin and isoleukotoxin to omega-hydroxylated metabolites. Contributes to the degradation of very long-chain fatty acids (VLCFAs) by catalyzing successive omega-oxidations and chain shortening. Plays an important role in vitamin metabolism by chain shortening. Catalyzes omega-hydroxylation of the phytyl chain of tocopherols (forms of vitamin E), with preference for gamma-tocopherols over alpha-tocopherols, thus promoting retention of alpha-tocopherols in tissues. Omega-hydroxylates and inactivates phylloquinone (vitamin K1), and menaquinone-4 (MK-4, a form of vitamin K2), both acting as cofactors in blood coagulation. The polypeptide is Cytochrome P450 4F2 (Homo sapiens (Human)).